Here is a 204-residue protein sequence, read N- to C-terminus: Adenylyl-sulfate kinase (204 aa).

34–41 (GLSGSGKS) is an ATP binding site. Ser-108 (phosphoserine intermediate) is an active-site residue.

Belongs to the APS kinase family.

It catalyses the reaction adenosine 5'-phosphosulfate + ATP = 3'-phosphoadenylyl sulfate + ADP + H(+). It functions in the pathway sulfur metabolism; hydrogen sulfide biosynthesis; sulfite from sulfate: step 2/3. Its function is as follows. Catalyzes the synthesis of activated sulfate. The polypeptide is Adenylyl-sulfate kinase (Phocaeicola vulgatus (strain ATCC 8482 / DSM 1447 / JCM 5826 / CCUG 4940 / NBRC 14291 / NCTC 11154) (Bacteroides vulgatus)).